The primary structure comprises 264 residues: SPARC (264 aa).

The signal sequence occupies residues 1 to 16 (MRYALAACLLLLAASS). The Follistatin-like domain maps to 52 to 74 (PCEDHQCGWGKECVVGKKGEPTC). 7 disulfide bridges follow: cysteine 53–cysteine 64, cysteine 58–cysteine 74, cysteine 76–cysteine 110, cysteine 80–cysteine 103, cysteine 92–cysteine 135, cysteine 141–cysteine 228, and cysteine 236–cysteine 252. A Kazal-like domain is found at 68–137 (KKGEPTCECI…HLEYLGECKK (70 aa)). Asparagine 96 carries an N-linked (GlcNAc...) asparagine glycan. The region spanning 224–259 (PMESCIKPFLEGCDANNDGNISIKEWGKCLGLKEGE) is the EF-hand domain. Positions 237, 239, 241, 243, and 248 each coordinate Ca(2+). N-linked (GlcNAc...) asparagine glycosylation is present at asparagine 243.

It belongs to the SPARC family. As to expression, expressed by body wall and sex muscle cells. Probable association with basement membranes.

Its subcellular location is the secreted. The protein resides in the extracellular space. It localises to the extracellular matrix. The protein localises to the basement membrane. Its function is as follows. Has a high affinity for collagen. Affects nematode body morphology and mobility. Essential for C.elegans development and muscle function. The cysteine-rich region could have protease inhibitory activity or may provide the framework for a protein binding module. Probable role in skeletal morphogenesis. This Caenorhabditis elegans protein is SPARC (ost-1).